The chain runs to 163 residues: Large ribosomal subunit protein uL15 (163 aa).

This sequence belongs to the universal ribosomal protein uL15 family. In terms of assembly, part of the 50S ribosomal subunit.

In terms of biological role, binds to the 23S rRNA. This chain is Large ribosomal subunit protein uL15, found in Orientia tsutsugamushi (strain Ikeda) (Rickettsia tsutsugamushi).